A 938-amino-acid chain; its full sequence is Probable outer membrane protein pmp15 (938 aa).

The N-terminal stretch at 1–17 is a signal peptide; that stretch reads MRFFCFGMLLPFTFVLA. One can recognise an Autotransporter domain in the interval 659–938; it reads DEEKGHAASL…YLNVASRMRF (280 aa).

It belongs to the PMP outer membrane protein family.

The protein resides in the secreted. It is found in the cell wall. The protein localises to the cell outer membrane. The chain is Probable outer membrane protein pmp15 (pmp15) from Chlamydia pneumoniae (Chlamydophila pneumoniae).